Consider the following 704-residue polypeptide: Elongation factor G (704 aa).

The tr-type G domain occupies 10–290 (TKVRNIGIMA…AVVDYLPSPL (281 aa)). GTP contacts are provided by residues 19 to 26 (AHIDAGKT), 83 to 87 (DTPGH), and 137 to 140 (NKMD).

It belongs to the TRAFAC class translation factor GTPase superfamily. Classic translation factor GTPase family. EF-G/EF-2 subfamily.

It is found in the cytoplasm. Its function is as follows. Catalyzes the GTP-dependent ribosomal translocation step during translation elongation. During this step, the ribosome changes from the pre-translocational (PRE) to the post-translocational (POST) state as the newly formed A-site-bound peptidyl-tRNA and P-site-bound deacylated tRNA move to the P and E sites, respectively. Catalyzes the coordinated movement of the two tRNA molecules, the mRNA and conformational changes in the ribosome. The polypeptide is Elongation factor G (Beutenbergia cavernae (strain ATCC BAA-8 / DSM 12333 / CCUG 43141 / JCM 11478 / NBRC 16432 / NCIMB 13614 / HKI 0122)).